The chain runs to 65 residues: Large ribosomal subunit protein uL30 (65 aa).

It belongs to the universal ribosomal protein uL30 family. Part of the 50S ribosomal subunit.

In Onion yellows phytoplasma (strain OY-M), this protein is Large ribosomal subunit protein uL30.